The primary structure comprises 196 residues: Large ribosomal subunit protein eL15 (196 aa).

The segment covering 162–172 (RGKTSAGRRAR) has biased composition (basic residues). The disordered stretch occupies residues 162–196 (RGKTSAGRRARGLQNRGKGTEGLRPSTNADKRNKS).

This sequence belongs to the eukaryotic ribosomal protein eL15 family.

The sequence is that of Large ribosomal subunit protein eL15 from Halobacterium salinarum (strain ATCC 29341 / DSM 671 / R1).